Reading from the N-terminus, the 568-residue chain is ATP-dependent RNA helicase MRH4, mitochondrial (568 aa).

The transit peptide at 1-50 (MVSILAIRTFNPLGHFVSTQCVRAYAINSVRAGSKSSSVRAGSKNDTTRA) directs the protein to the mitochondrion. The span at 36 to 49 (SSSVRAGSKNDTTR) shows a compositional bias: polar residues. The segment at 36–64 (SSSVRAGSKNDTTRASSKKNKAGKSKLQL) is disordered. The Q motif signature appears at 143–150 (EIHPSPIQ). The 189-residue stretch at 160-348 (NLMEPKLQVH…TKMFPNAIPL (189 aa)) folds into the Helicase ATP-binding domain. 173–180 (AETGSGKT) is a binding site for ATP. The DEAD box signature appears at 296-299 (DEAD). Positions 379 to 568 (ALAQTLYAIA…TILKKNKALT (190 aa)) constitute a Helicase C-terminal domain.

It belongs to the DEAD box helicase family. MRH4 subfamily.

It is found in the mitochondrion. The catalysed reaction is ATP + H2O = ADP + phosphate + H(+). Functionally, ATP-binding RNA helicase involved in mitochondrial RNA metabolism. Required for maintenance of mitochondrial DNA. This chain is ATP-dependent RNA helicase MRH4, mitochondrial (MRH4), found in Candida glabrata (strain ATCC 2001 / BCRC 20586 / JCM 3761 / NBRC 0622 / NRRL Y-65 / CBS 138) (Yeast).